A 332-amino-acid polypeptide reads, in one-letter code: MIRIAINGFGRIGRLVLRLALQRKDIEVVAVNDPFISNDYAAYMVKYDSTHGRYKGTVSHDDKHIIIDGVKIATYQERDPANLPWGSLKIDVAVDSTGVFKELDTAQKHIDAGAKKVVITAPSSSAPMFVVGVNHTKYTPDKKIVSNASCTTNCLAPLAKVINDAFGIEEGLMTTVHSMTATQKTVDGPSHKDWRGGRTASGNIIPSSTGAAKAVGKVLPELQGKLTGMAFRVPTVDVSVVDLTVKLEKEATYDQIKKAVKAAAEGPMKGVLGYTEDAVVSSDFLGDTHASIFDASAGIQLSPKFVKLISWYDNEYGYSARVVDLIEYVAKA.

NAD(+)-binding residues include arginine 11, isoleucine 12, aspartate 33, and threonine 120. D-glyceraldehyde 3-phosphate contacts are provided by residues 149 to 151, threonine 180, 209 to 210, and arginine 232; these read SCT and TG. Catalysis depends on cysteine 150, which acts as the Nucleophile. Residues asparagine 314 and tyrosine 318 each coordinate NAD(+).

This sequence belongs to the glyceraldehyde-3-phosphate dehydrogenase family. Homotetramer.

It localises to the cytoplasm. It catalyses the reaction D-glyceraldehyde 3-phosphate + phosphate + NAD(+) = (2R)-3-phospho-glyceroyl phosphate + NADH + H(+). The enzyme catalyses NADH + H2O = (6R)-NADHX. It carries out the reaction NADH + H2O = (6S)-NADHX. The catalysed reaction is NADPH + H2O = (6R)-NADPHX. It catalyses the reaction NADPH + H2O = (6S)-NADPHX. The protein operates within carbohydrate degradation; glycolysis; pyruvate from D-glyceraldehyde 3-phosphate: step 1/5. Functionally, glyceraldehyde-3-phosphate dehydrogenase (GAPDH) involved in glycolysis and gluconeogenesis. Catalyzes the reaction of glyceraldehyde-3-phosphate to 1,3 bis-phosphoglycerate. The contribution of the TDH1, TDH2, and TDH3 to the total glyceraldehyde-3-phosphate dehydrogenase activity is 10-15, 25-30, and 50-60%, respectively. May be involved in a process other than glycolysis because it is synthesized by cells in stationary phase. Its function is as follows. As a side activity, catalyzes the hydration of the nicotinamide ring of NADH or NADPH at the C6 position to give the corresponding hydrates, NADHX and NADPHX, which exist as R and S epimers, that cannot act as electron donors or acceptors and inhibit several dehydrogenases, making them toxic. The sequence is that of Glyceraldehyde-3-phosphate dehydrogenase 1 from Saccharomyces cerevisiae (strain ATCC 204508 / S288c) (Baker's yeast).